A 479-amino-acid polypeptide reads, in one-letter code: Tegument protein VP16 homolog (479 aa).

This sequence belongs to the herpesviridae tegument protein VP16 protein family. As to quaternary structure, associates with the VP16-induced complex; binding to host HCFC1 activates VP16 for association with the octamer motif-binding host protein POU2F1, to form a multiprotein-DNA complex responsible for activating transcription of the viral immediate early genes.

The protein localises to the virion tegument. The protein resides in the host nucleus. Its function is as follows. Transcriptional activator of immediate-early (IE) gene products (alpha genes). Acts as a key activator of lytic infection by initiating the lytic program through the assembly of the transcriptional regulatory VP16-induced complex composed of VP16 and two cellular factors, HCFC1 and POU2F1. VP16-induced complex represents a regulatory switch: when it is on, it promotes IE-gene expression and thus lytic infection, and when it is off, it limits IE-gene transcription favoring latent infection. In terms of biological role, may play a role in the aggregation of tegument proteins around nucleocapsids during virus morphogenesis. The protein is Tegument protein VP16 homolog of Equus caballus (Horse).